An 83-amino-acid chain; its full sequence is Small ribosomal subunit protein bS16 (83 aa).

This sequence belongs to the bacterial ribosomal protein bS16 family.

The sequence is that of Small ribosomal subunit protein bS16 from Pseudomonas aeruginosa (strain LESB58).